The following is a 68-amino-acid chain: Large ribosomal subunit protein bL32 (68 aa).

The disordered stretch occupies residues 1–20; it reads MAVPQNRVTRSRRNMRRSHD.

The protein belongs to the bacterial ribosomal protein bL32 family.

This chain is Large ribosomal subunit protein bL32, found in Cereibacter sphaeroides (strain ATCC 17029 / ATH 2.4.9) (Rhodobacter sphaeroides).